We begin with the raw amino-acid sequence, 611 residues long: MATVAPKGNCLVARAIPSDSHADQLTDLLCKLSVNGDANQKSVNKFESQHGVTPSDFRDIQNIRSSALAKKTKTSKFQLDGVTLFADLTPNSKSKKKTENQETKEKDEEAEEKKDGPPKDDKELKMKKEKEQEDENAELDEQKKDGDLLGRGPVHNVRVATGGSHPYHRAQIPYGCAAQTPITDISAYTGYGSGYECGSTWSLSPDTTIGSISASTTPDTVLSSDGYGSASPPQHSPKESLQSPFSDISSADTSRVLTPENNELPESLQDFILQYSNQYTKEESIRGRPPSADSGVSSPMSARSAPYASPHVPQGTCSGPTTPSFNQTRLSPRTSENGITAKQRLNAIIPESDLATGFHWACTTWKNVLTNRDADGDTPLHIVAAHNDLGKIYALCETLRKTMNENDDNVFNVSNNFGETPLYVAVLQRSIEVVEYLLELGASPNSRSSRAVGDSPLHFATARGMNNMVEALLSKREIRVNETNDDGQTSLLCAVKMHGMMDEQTQHKIDNKSIIEMLIKAGADPTIAETSTGKTIVHHAVDKMDVELLDFLKTVVNEDTFTELANLSDFHGDTAVDLLCSSTQNEDTNNVRENLYIRLLTSGAVPNKSRA.

Residues 91–149 (NSKSKKKTENQETKEKDEEAEEKKDGPPKDDKELKMKKEKEQEDENAELDEQKKDGDLL) adopt a coiled-coil conformation. Disordered stretches follow at residues 92–167 (SKSK…SHPY), 212–255 (ISAS…DTSR), and 280–333 (TKEE…LSPR). The segment covering 97-131 (KTENQETKEKDEEAEEKKDGPPKDDKELKMKKEKE) has biased composition (basic and acidic residues). Composition is skewed to polar residues over residues 212-223 (ISASTTPDTVLS), 239-255 (ESLQSPFSDISSADTSR), and 315-333 (GTCSGPTTPSFNQTRLSPR). ANK repeat units lie at residues 375-405 (DGDTPLHIVAAHNDLGKIYALCETLRKTMNE), 417-446 (FGETPLYVAVLQRSIEVVEYLLELGASPNS), 452-482 (VGDSPLHFATARGMNNMVEALLSKREIRVNE), 486-527 (DGQT…DPTI), and 532-561 (TGKTIVHHAVDKMDVELLDFLKTVVNEDTF).

It belongs to the iASPP family. In terms of tissue distribution, expressed in the nervous system.

In terms of biological role, acts downstream of the receptor complex composed of ilcr-1 and ilcr-2, which is a signaling complex that modulates neuronal activity and animal behavior in response to sensory neuron input. Mediates signaling of the complex. The chain is ANK repeat-containing protein nipk-1 from Caenorhabditis elegans.